We begin with the raw amino-acid sequence, 236 residues long: 2,3,4,5-tetrahydropyridine-2,6-dicarboxylate N-acetyltransferase (236 aa).

It belongs to the transferase hexapeptide repeat family. DapH subfamily.

It catalyses the reaction (S)-2,3,4,5-tetrahydrodipicolinate + acetyl-CoA + H2O = L-2-acetamido-6-oxoheptanedioate + CoA. Its pathway is amino-acid biosynthesis; L-lysine biosynthesis via DAP pathway; LL-2,6-diaminopimelate from (S)-tetrahydrodipicolinate (acetylase route): step 1/3. Its function is as follows. Catalyzes the transfer of an acetyl group from acetyl-CoA to tetrahydrodipicolinate. This is 2,3,4,5-tetrahydropyridine-2,6-dicarboxylate N-acetyltransferase from Clostridium botulinum (strain Eklund 17B / Type B).